We begin with the raw amino-acid sequence, 490 residues long: UDP-N-acetylmuramoylalanine--D-glutamate ligase (490 aa).

Position 124 to 130 (124 to 130) interacts with ATP; the sequence is GTNGKTT.

Belongs to the MurCDEF family.

It localises to the cytoplasm. It carries out the reaction UDP-N-acetyl-alpha-D-muramoyl-L-alanine + D-glutamate + ATP = UDP-N-acetyl-alpha-D-muramoyl-L-alanyl-D-glutamate + ADP + phosphate + H(+). It participates in cell wall biogenesis; peptidoglycan biosynthesis. Cell wall formation. Catalyzes the addition of glutamate to the nucleotide precursor UDP-N-acetylmuramoyl-L-alanine (UMA). The polypeptide is UDP-N-acetylmuramoylalanine--D-glutamate ligase (murD) (Mycobacterium leprae (strain TN)).